The chain runs to 215 residues: Large ribosomal subunit protein uL16 (215 aa).

It belongs to the universal ribosomal protein uL16 family. As to quaternary structure, component of the small ribosomal subunit. Mature ribosomes consist of a small (40S) and a large (60S) subunit. The 40S subunit contains about 33 different proteins and 1 molecule of RNA (18S). The 60S subunit contains about 49 different proteins and 3 molecules of RNA (25S, 5.8S and 5S).

The polypeptide is Large ribosomal subunit protein uL16 (RPL10) (Euglena gracilis).